Consider the following 208-residue polypeptide: Ribosomal RNA large subunit methyltransferase E (208 aa).

5 residues coordinate S-adenosyl-L-methionine: Gly62, Trp64, Asp82, Asp98, and Asp123. The active-site Proton acceptor is the Lys163.

Belongs to the class I-like SAM-binding methyltransferase superfamily. RNA methyltransferase RlmE family.

The protein resides in the cytoplasm. It carries out the reaction uridine(2552) in 23S rRNA + S-adenosyl-L-methionine = 2'-O-methyluridine(2552) in 23S rRNA + S-adenosyl-L-homocysteine + H(+). In terms of biological role, specifically methylates the uridine in position 2552 of 23S rRNA at the 2'-O position of the ribose in the fully assembled 50S ribosomal subunit. The chain is Ribosomal RNA large subunit methyltransferase E from Edwardsiella ictaluri (strain 93-146).